Consider the following 108-residue polypeptide: Vacuolar ATPase assembly integral membrane protein VMA21 (108 aa).

Topologically, residues 1 to 34 are cytoplasmic; sequence MASRRSAAAKKEDFSFEAAATQSAHEAQEGFPSS. Residues 35-55 form a helical membrane-spanning segment; the sequence is VIIKLVLVTVAMICAPLGTYF. The Lumenal portion of the chain corresponds to 56 to 68; it reads GTLNTICGGDSSY. The helical transmembrane segment at 69 to 89 threads the bilayer; that stretch reads AGALAAISVNVVLIIYLIIAA. Topologically, residues 90 to 108 are cytoplasmic; that stretch reads REDTGESEEERKGKEGKEE.

It belongs to the VMA21 family.

It localises to the endoplasmic reticulum membrane. Its subcellular location is the endoplasmic reticulum-Golgi intermediate compartment membrane. The protein resides in the cytoplasmic vesicle. The protein localises to the COPII-coated vesicle membrane. Its function is as follows. Required for the assembly of the V0 complex of the vacuolar ATPase (V-ATPase) in the endoplasmic reticulum. The chain is Vacuolar ATPase assembly integral membrane protein VMA21 from Ajellomyces capsulatus (strain NAm1 / WU24) (Darling's disease fungus).